Here is a 190-residue protein sequence, read N- to C-terminus: MNNNLPTGSIAAVVDLLNKENVIAYPTEAVFGVGCDPDSETAVTRLLALKQRPVDKGLILIAASFEQLKPYIDDSILTAAQRKAVFDCWPGPVTFVFPAPATTPRWLTGRFDSLAVRVTNHPLVVALCNAYGKPLVSTSANLSGLPPCRTVEEVRAQFGDDFPVVEGATGGRLKPSEIRDALTGELFRQG.

In terms of domain architecture, YrdC-like spans 7 to 190; the sequence is TGSIAAVVDL…ALTGELFRQG (184 aa).

This sequence belongs to the SUA5 family. TsaC subfamily.

The protein localises to the cytoplasm. The enzyme catalyses L-threonine + hydrogencarbonate + ATP = L-threonylcarbamoyladenylate + diphosphate + H2O. Its function is as follows. Required for the formation of a threonylcarbamoyl group on adenosine at position 37 (t(6)A37) in tRNAs that read codons beginning with adenine. Catalyzes the conversion of L-threonine, HCO(3)(-)/CO(2) and ATP to give threonylcarbamoyl-AMP (TC-AMP) as the acyladenylate intermediate, with the release of diphosphate. This chain is Threonylcarbamoyl-AMP synthase, found in Salmonella paratyphi A (strain ATCC 9150 / SARB42).